The chain runs to 724 residues: Solute carrier organic anion transporter family member 4C1 (724 aa).

Residues 1 to 80 (MQGSKGVENP…PPGSQLSELE (80 aa)) are disordered. Topologically, residues 1 to 101 (MQGSKGVENP…QCLQRCNNPK (101 aa)) are cytoplasmic. Phosphoserine is present on residues Ser-15 and Ser-16. Thr-19 carries the phosphothreonine modification. A phosphoserine mark is found at Ser-24, Ser-26, and Ser-28. The span at 25–46 (ASPSQVEVSAVASRNQNGGSQP) shows a compositional bias: polar residues. Residues 102–122 (GFLLHYCLLALTQGIVVNGLV) form a helical membrane-spanning segment. Residues 123–141 (NISISTIEKRYEMKSSLTG) lie on the Extracellular side of the membrane. Residues 142–162 (LISSSYDISFCVLSLFVSFFG) traverse the membrane as a helical segment. At 163–168 (ERGHKP) the chain is on the cytoplasmic side. A helical membrane pass occupies residues 169-193 (RWLAFASFMIGLGALVFSLPHFFSG). At 194 to 218 (RYELGTIFEDTCLTRNSTRCASSTS) the chain is on the extracellular side. The chain crosses the membrane as a helical span at residues 219-249 (LLSNYFYVFVLGQLLLGTGGTPLYTLGTAFI). The Cytoplasmic portion of the chain corresponds to 250-269 (DDSVPTHKSSLYIGIGYSMS). A helical transmembrane segment spans residues 270 to 290 (ILGPAIGYVLGGQLLTMYIDV). At 291–306 (AMGQSSDLTEDDPRWL) the chain is on the extracellular side. Residues 307-331 (GAWWIGFLLAWLFAWSLIMPFSCFP) traverse the membrane as a helical segment. The Cytoplasmic segment spans residues 332–376 (KHLPGTAKIQAGKTSQTHQNNSTSFQHMDENFGKSIKDFPTAVKN). A helical membrane pass occupies residues 377–398 (LMRNTVFICLVLSTTSEALVTT). The Extracellular segment spans residues 399–418 (GFATFLPKFIENQFGLTSSF). The chain crosses the membrane as a helical span at residues 419 to 442 (AATLGGAVLIPGAALGQILGGVLV). Residues 443–446 (SKFK) lie on the Cytoplasmic side of the membrane. Residues 447–470 (MKCKNTMKFALCTSGVALMLSFVF) form a helical membrane-spanning segment. Residues 471–580 (IYAKCENGPF…KTQCSNLPIF (110 aa)) lie on the Extracellular side of the membrane. In terms of domain architecture, Kazal-like spans 494–549 (GNLTAPCNANCNCLRSYYYPLCGSDGVQYFSPCFAGCLNSVSNRKPKAYYNCSCIE). Intrachain disulfides connect Cys-500–Cys-530, Cys-506–Cys-526, and Cys-515–Cys-547. A helical transmembrane segment spans residues 581 to 603 (LGIFFITVIFTFMAGTPITVSIL). At 604–612 (RCVNHRQRS) the chain is on the cytoplasmic side. A helical transmembrane segment spans residues 613-638 (LALGVQFMLLRLLGTIPGPIIFGVTI). The Extracellular portion of the chain corresponds to 639-672 (DSTCVLWDINECGTKGACWIYDNIRMAHMLVAIS). The chain crosses the membrane as a helical span at residues 673 to 690 (VTCKVITIFFNGLAIVLY). Over 691 to 724 (KPPPPGTEVSFQSQNVVVSTITVEEDLNKIENEG) the chain is Cytoplasmic.

It belongs to the organo anion transporter (TC 2.A.60) family. Predominantly expressed in kidney and lung but also weakly expressed in brain. Localizes primarily in the proximal straight tubules, the S3 fraction of the nephron.

It is found in the basolateral cell membrane. The protein localises to the apical cell membrane. The catalysed reaction is estrone 3-sulfate(out) = estrone 3-sulfate(in). The enzyme catalyses L-thyroxine(out) = L-thyroxine(in). It carries out the reaction 3,3',5-triiodo-L-thyronine(out) = 3,3',5-triiodo-L-thyronine(in). It catalyses the reaction chenodeoxycholate(out) = chenodeoxycholate(in). The catalysed reaction is glycocholate(out) = glycocholate(in). The enzyme catalyses L-homoarginine(in) = L-homoarginine(out). It carries out the reaction L-arginine(in) = L-arginine(out). It catalyses the reaction N(omega),N(omega)-dimethyl-L-arginine(out) = N(omega),N(omega)-dimethyl-L-arginine(in). Its function is as follows. Mediates the transport of organic anions such as steroids (estrone 3-sulfate, chenodeoxycholate, glycocholate) and thyroid hormones (3,3',5-triiodo-L-thyronine (T3), L-thyroxine (T4)), in the kidney. Capable of transporting cAMP and pharmacological substances such as digoxin, ouabain and methotrexate. Transport is independent of sodium, chloride ion, and ATP. Transport activity is stimulated by an acidic extracellular environment due to increased substrate affinity to the transporter. The driving force for this transport activity is currently not known. The role of hydrogencarbonate (HCO3(-), bicarbonate) as the probable counteranion that exchanges for organic anions is still not well defined. Functions as an uptake transporter at the apical membrane, suggesting a role in renal reabsorption. Involved in the renal secretion of the uremic toxin ADMA (N(omega),N(omega)-dimethyl-L-arginine or asymmetrical dimethylarginine), which is associated to cardiovascular events and mortality, and the structurally related amino acids L-arginine and L-homoarginine (a cardioprotective biomarker). Can act bidirectionally, suggesting a dual protective role of this transport protein; exporting L-homoarginine after being synthesized in proximal tubule cells, and mediating uptake of ADMA from the blood into proximal tubule cells where it is degraded by the enzyme dimethylarginine dimethylaminohydrolase 1 (DDAH1). May be involved in sperm maturation by enabling directed movement of organic anions and compounds within or between cells. This ion-transporting process is important to maintain the strict epididymal homeostasis necessary for sperm maturation. May have a role in secretory functions since seminal vesicle epithelial cells are assumed to secrete proteins involved in decapacitation by modifying surface proteins to facilitate the acquisition of the ability to fertilize the egg. The polypeptide is Solute carrier organic anion transporter family member 4C1 (Rattus norvegicus (Rat)).